A 228-amino-acid chain; its full sequence is MALRNLMTKKPFAGILTFRQQLRCVQTFSLPDLSYDYGALEPAISGEIMQLHHQKHHQTYITNYNNALQQLHDAINKGDSPTVAKLQGAIKFNGGGHINHSVFWKNLAPTREGGGEPPKGSLGSAIDTNFGSLEAVIQKMNAEGAALQGSGWVWLGLDKELKRLVIETTANQDPLVIKGPNLVPLLGIDVWEHAYYLQYKNVKPDYLKNIWKVINWKYAAEVYEKECP.

The N-terminal 24 residues, 1-24 (MALRNLMTKKPFAGILTFRQQLRC), are a transit peptide targeting the mitochondrion. Mn(2+) contacts are provided by histidine 52, histidine 100, aspartate 189, and histidine 193.

The protein belongs to the iron/manganese superoxide dismutase family. As to quaternary structure, homotetramer. It depends on Mn(2+) as a cofactor.

The protein resides in the mitochondrion matrix. It catalyses the reaction 2 superoxide + 2 H(+) = H2O2 + O2. Destroys superoxide anion radicals which are normally produced within the cells and which are toxic to biological systems. This Capsicum annuum (Capsicum pepper) protein is Superoxide dismutase [Mn], mitochondrial (SODA).